A 151-amino-acid chain; its full sequence is Nucleoside diphosphate kinase (151 aa).

Positions 11, 59, 87, 93, 104, and 114 each coordinate ATP. Histidine 117 acts as the Pros-phosphohistidine intermediate in catalysis.

The protein belongs to the NDK family. As to quaternary structure, homotetramer. It depends on Mg(2+) as a cofactor.

It is found in the cytoplasm. It catalyses the reaction a 2'-deoxyribonucleoside 5'-diphosphate + ATP = a 2'-deoxyribonucleoside 5'-triphosphate + ADP. The enzyme catalyses a ribonucleoside 5'-diphosphate + ATP = a ribonucleoside 5'-triphosphate + ADP. Functionally, major role in the synthesis of nucleoside triphosphates other than ATP. The ATP gamma phosphate is transferred to the NDP beta phosphate via a ping-pong mechanism, using a phosphorylated active-site intermediate. The sequence is that of Nucleoside diphosphate kinase from Prochlorococcus marinus (strain MIT 9211).